We begin with the raw amino-acid sequence, 210 residues long: Inner membrane-spanning protein YciB (210 aa).

Helical transmembrane passes span 12–32 (EVSP…FFFA), 53–73 (IFIA…VSWM), 78–98 (LPMM…LTLW), 115–135 (LFGA…GYVF), 153–173 (WGVF…SFST), and 175–195 (FWVA…TLAQ).

Belongs to the YciB family.

It localises to the cell inner membrane. In terms of biological role, plays a role in cell envelope biogenesis, maintenance of cell envelope integrity and membrane homeostasis. This is Inner membrane-spanning protein YciB from Sinorhizobium medicae (strain WSM419) (Ensifer medicae).